The sequence spans 395 residues: Guanine nucleotide-binding protein subunit beta-5 (395 aa).

7 WD repeats span residues 103–142 (GHGN…KEHA), 145–184 (MPCT…NENM), 193–234 (MHTN…QSFH), 236–278 (HGAD…QAFE), 279–318 (THES…EVAI), 320–362 (SKES…RVSI), and 365–394 (GHEN…LRVW).

This sequence belongs to the WD repeat G protein beta family. As to quaternary structure, component of a complex composed of RGS9 (isoform RGS9-1), GNB5 and RGS9BP; within this complex, the presence of GNB5 stabilizes both itself and RGS9 and increases RGS9 GTPase-activating protein (GAP) activity. Interacts with RGS7, forming the RGS7-GNB5 complex; within this complex, the presence of GNB5 increases RGS7 GTPase-activating protein (GAP) activity. Interacts with GPR158; promotes the GTPase activator activity of the RGS7-GNB5 complex in absence of glycine, in contrast GTPase activator activity of the RGS7-GNB5 complex is inhibited in presence of glycine. Interacts with RGS6. In terms of tissue distribution, isoform 1 is only detected in retina. Isoform 2 is detected in brain (at protein level). Isoform 2 is detected in brain.

The protein localises to the membrane. Enhances GTPase-activating protein (GAP) activity of regulator of G protein signaling (RGS) proteins, such as RGS7 and RGS9, hence involved in the termination of the signaling initiated by the G protein coupled receptors (GPCRs) by accelerating the GTP hydrolysis on the G-alpha subunits, thereby promoting their inactivation. Increases RGS7 GTPase-activating protein (GAP) activity, thereby regulating mood and cognition. Increases RGS9 GTPase-activating protein (GAP) activity, hence contributes to the deactivation of G protein signaling initiated by D(2) dopamine receptors. May play an important role in neuronal signaling, including in the parasympathetic, but not sympathetic, control of heart rate. This Mus musculus (Mouse) protein is Guanine nucleotide-binding protein subunit beta-5 (Gnb5).